The primary structure comprises 64 residues: Small ribosomal subunit protein bS21 (64 aa).

The protein belongs to the bacterial ribosomal protein bS21 family.

The chain is Small ribosomal subunit protein bS21 from Oenococcus oeni (strain ATCC BAA-331 / PSU-1).